The sequence spans 281 residues: 2,3,4,5-tetrahydropyridine-2,6-dicarboxylate N-succinyltransferase (281 aa).

Substrate contacts are provided by R108 and D145.

The protein belongs to the transferase hexapeptide repeat family. In terms of assembly, homotrimer.

It localises to the cytoplasm. It carries out the reaction (S)-2,3,4,5-tetrahydrodipicolinate + succinyl-CoA + H2O = (S)-2-succinylamino-6-oxoheptanedioate + CoA. It functions in the pathway amino-acid biosynthesis; L-lysine biosynthesis via DAP pathway; LL-2,6-diaminopimelate from (S)-tetrahydrodipicolinate (succinylase route): step 1/3. In Nitrobacter hamburgensis (strain DSM 10229 / NCIMB 13809 / X14), this protein is 2,3,4,5-tetrahydropyridine-2,6-dicarboxylate N-succinyltransferase.